Consider the following 190-residue polypeptide: Probable calcium-binding protein CML27 (190 aa).

3 consecutive EF-hand domains span residues 27–62 (LNALRLRRVFDLFDRNGDGEITLDEMASALDALGLG), 115–150 (DDEGDMKEAFRVFDEDGDGFISAAELQAVLKKLGLP), and 153–188 (RNLATVQEMICNVDRDCDGRVDFGEFKCMMQGITVW). The Ca(2+) site is built by D40, N42, D44, E46, E51, D128, D130, D132, E139, D166, D168, D170, R172, and E177.

Its function is as follows. Potential calcium sensor. In Oryza sativa subsp. japonica (Rice), this protein is Probable calcium-binding protein CML27 (CML27).